A 521-amino-acid polypeptide reads, in one-letter code: 2,3-bisphosphoglycerate-independent phosphoglycerate mutase (521 aa).

Residues D18 and S68 each coordinate Mn(2+). S68 serves as the catalytic Phosphoserine intermediate. Substrate contacts are provided by residues H129, 158–159 (RD), R190, R196, 266–269 (RSDR), and K343. Mn(2+)-binding residues include D410, H414, D451, H452, and H470.

It belongs to the BPG-independent phosphoglycerate mutase family. Monomer. The cofactor is Mn(2+).

It catalyses the reaction (2R)-2-phosphoglycerate = (2R)-3-phosphoglycerate. It participates in carbohydrate degradation; glycolysis; pyruvate from D-glyceraldehyde 3-phosphate: step 3/5. Catalyzes the interconversion of 2-phosphoglycerate and 3-phosphoglycerate. In Hydrogenovibrio crunogenus (strain DSM 25203 / XCL-2) (Thiomicrospira crunogena), this protein is 2,3-bisphosphoglycerate-independent phosphoglycerate mutase.